The following is a 504-amino-acid chain: ATP synthase subunit alpha (504 aa).

169–176 (GDRQTGKT) is an ATP binding site.

Belongs to the ATPase alpha/beta chains family. F-type ATPases have 2 components, CF(1) - the catalytic core - and CF(0) - the membrane proton channel. CF(1) has five subunits: alpha(3), beta(3), gamma(1), delta(1), epsilon(1). CF(0) has three main subunits: a(1), b(2) and c(9-12). The alpha and beta chains form an alternating ring which encloses part of the gamma chain. CF(1) is attached to CF(0) by a central stalk formed by the gamma and epsilon chains, while a peripheral stalk is formed by the delta and b chains.

Its subcellular location is the cell membrane. It catalyses the reaction ATP + H2O + 4 H(+)(in) = ADP + phosphate + 5 H(+)(out). Produces ATP from ADP in the presence of a proton gradient across the membrane. The alpha chain is a regulatory subunit. This is ATP synthase subunit alpha from Clostridium botulinum (strain ATCC 19397 / Type A).